The following is a 331-amino-acid chain: Probable tRNA pseudouridine synthase B (331 aa).

D66 serves as the catalytic Nucleophile. A PUA domain is found at 233-307; it reads INKIIVKDSA…NEEDNREKYK (75 aa).

Belongs to the pseudouridine synthase TruB family. Type 2 subfamily.

It catalyses the reaction uridine(55) in tRNA = pseudouridine(55) in tRNA. Functionally, could be responsible for synthesis of pseudouridine from uracil-55 in the psi GC loop of transfer RNAs. This chain is Probable tRNA pseudouridine synthase B, found in Methanococcus aeolicus (strain ATCC BAA-1280 / DSM 17508 / OCM 812 / Nankai-3).